A 357-amino-acid chain; its full sequence is S-adenosyl-L-methionine:benzoic acid/salicylic acid carboxyl methyltransferase 1 (357 aa).

Y18 provides a ligand contact to S-adenosyl-L-homocysteine. A benzoate-binding site is contributed by Q25. Residues C59, N64, D96, L97, S135, and F136 each coordinate S-adenosyl-L-homocysteine. Residue W157 participates in benzoate binding. The Mg(2+) site is built by N168, D254, F256, and N257. Q260 is a benzoate binding site.

Belongs to the methyltransferase superfamily. Type-7 methyltransferase family. In terms of tissue distribution, predominantly expressed in petal limbs and tubes of corollas.

It carries out the reaction benzoate + S-adenosyl-L-methionine = methyl benzoate + S-adenosyl-L-homocysteine. The catalysed reaction is salicylate + S-adenosyl-L-methionine = methyl salicylate + S-adenosyl-L-homocysteine. It functions in the pathway aromatic compound metabolism. In terms of biological role, converts benzoic acid into the volatile ester methyl benzoates. This scent, mostly produced in a rhythmical, diurnal manner, attracts the pollinators. In Petunia hybrida (Petunia), this protein is S-adenosyl-L-methionine:benzoic acid/salicylic acid carboxyl methyltransferase 1.